Here is a 510-residue protein sequence, read N- to C-terminus: ATP synthase subunit alpha (510 aa).

Residue G170–T177 coordinates ATP.

Belongs to the ATPase alpha/beta chains family. F-type ATPases have 2 components, CF(1) - the catalytic core - and CF(0) - the membrane proton channel. CF(1) has five subunits: alpha(3), beta(3), gamma(1), delta(1), epsilon(1). CF(0) has three main subunits: a(1), b(2) and c(9-12). The alpha and beta chains form an alternating ring which encloses part of the gamma chain. CF(1) is attached to CF(0) by a central stalk formed by the gamma and epsilon chains, while a peripheral stalk is formed by the delta and b chains.

It localises to the cell inner membrane. It catalyses the reaction ATP + H2O + 4 H(+)(in) = ADP + phosphate + 5 H(+)(out). In terms of biological role, produces ATP from ADP in the presence of a proton gradient across the membrane. The alpha chain is a regulatory subunit. This is ATP synthase subunit alpha from Acidiphilium cryptum (strain JF-5).